Here is a 688-residue protein sequence, read N- to C-terminus: MKPLSLLIEILIILGVTIKTIKAEEHNKRQKERNVTTQVSVNEIKQYLSHILEQRTSSNVINKRENLLEKKKNQRKIRIKGIQNKDILKRNKNHLQKQAEKNFTDEGDQLFKMGIKVLQQSKSQKQKEEAYLLFAKAADMGNLKAMEKMADALLFGNFGVQNITAAIQLYESLAKEGSCKAQNALGFLSSYGIGMEYDQAKALIYYTFGSAGGNMMSQMILGYRYLSGINVLQNCEVALSYYKKVADYIADTFEKSEGVPVEKVRLTERPENLSSNSEILDWDIYQYYKFLAERGDVQIQVSLGQLHLIGRKGLDQDYYKALHYFLKAAKAGSANAMAFIGKMYLEGNAAVPQNNATAFKYFSMAASKGNAIGLHGLGLLYFHGKGVPLNYAEALKYFQKAAEKGWPDAQFQLGFMYYSGSGIWKDYKLAFKYFYLASQSGQPLAIYYLAKMYATGTGVVRSCRTAVELYKGVCELGHWAEKFLTAYFAYKDGDIDSSLVQYALLAEMGYEVAQSNSAFILESKKANILEKEKMYPMALLLWNRAAIQGNAFARVKIGDYHYYGYGTKKDYQTAATHYSIAANKYHNAQAMFNLAYMYEHGLGITKDIHLARRLYDMAAQTSPDAHIPVLFAVMKLETTHLLRDILFFNFTTRWNWLKLDNTIGPHWDLFVIGLIVPGLILLLRNHHG.

An N-terminal signal peptide occupies residues 1-23 (MKPLSLLIEILIILGVTIKTIKA). Over 24-662 (EEHNKRQKER…RWNWLKLDNT (639 aa)) the chain is Extracellular. N-linked (GlcNAc...) asparagine glycosylation is present at Asn-34. Sel1-like repeat units follow at residues 107-142 (GDQL…DMGN), 143-178 (LKAM…KEGS), 179-214 (CKAQ…AGGN), 215-250 (MMSQ…DYIA), 297-333 (VQIQ…KAGS), 334-370 (ANAM…SKGN), 371-406 (AIGL…EKGW), 407-442 (PDAQ…QSGQ), 443-478 (PLAI…ELGH), 551-586 (AFAR…NKYH), and 588-623 (AQAM…QTSP). The chain crosses the membrane as a helical span at residues 663–683 (IGPHWDLFVIGLIVPGLILLL). Residues 684 to 688 (RNHHG) are Cytoplasmic-facing.

Belongs to the sel-1 family.

The protein localises to the membrane. It is found in the cell projection. The protein resides in the cilium. Its subcellular location is the nucleus speckle. In Homo sapiens (Human), this protein is Protein sel-1 homolog 2 (SEL1L2).